The following is a 370-amino-acid chain: Anhydro-N-acetylmuramic acid kinase (370 aa).

Residue 12-19 (GTSLDGVD) participates in ATP binding.

Belongs to the anhydro-N-acetylmuramic acid kinase family.

The catalysed reaction is 1,6-anhydro-N-acetyl-beta-muramate + ATP + H2O = N-acetyl-D-muramate 6-phosphate + ADP + H(+). Its pathway is amino-sugar metabolism; 1,6-anhydro-N-acetylmuramate degradation. It participates in cell wall biogenesis; peptidoglycan recycling. In terms of biological role, catalyzes the specific phosphorylation of 1,6-anhydro-N-acetylmuramic acid (anhMurNAc) with the simultaneous cleavage of the 1,6-anhydro ring, generating MurNAc-6-P. Is required for the utilization of anhMurNAc either imported from the medium or derived from its own cell wall murein, and thus plays a role in cell wall recycling. This Proteus mirabilis (strain HI4320) protein is Anhydro-N-acetylmuramic acid kinase.